We begin with the raw amino-acid sequence, 180 residues long: Cell wall / vacuolar inhibitor of fructosidase 2 (180 aa).

The N-terminal stretch at 1–23 (MASSLIFLLLVTLTFSASTLISA) is a signal peptide. Residue Asn26 is glycosylated (N-linked (GlcNAc...) asparagine). Cys35 and Cys44 are joined by a disulfide. N-linked (GlcNAc...) asparagine glycans are attached at residues Asn73 and Asn84. Cys101 and Cys141 form a disulfide bridge.

The protein belongs to the PMEI family. As to expression, mostly expressed at low levels in seedlings, stems, leaves and flowers (in all organs), and, to a lower extent, in roots and siliques.

The protein resides in the vacuole. In terms of biological role, inhibits fructosidases from both cell wall (cell wall invertase CWI) and vacuoles (vacuolar invertase VI). The chain is Cell wall / vacuolar inhibitor of fructosidase 2 (C/VIF2) from Arabidopsis thaliana (Mouse-ear cress).